The following is a 360-amino-acid chain: Phospho-N-acetylmuramoyl-pentapeptide-transferase (360 aa).

The next 10 helical transmembrane spans lie at 21-41 (YLSF…LWMG), 73-93 (TMGG…WADL), 94-114 (TNPY…VGFV), 132-152 (WKYF…YAHG), 168-188 (VMPQ…VGTS), 199-219 (GLAI…AWAT), 239-259 (LVVV…FNTY), 263-283 (VFMG…IAVL), 288-308 (FVLV…ILQV), and 338-358 (VIVR…ATLK).

The protein belongs to the glycosyltransferase 4 family. MraY subfamily. It depends on Mg(2+) as a cofactor.

It localises to the cell inner membrane. It catalyses the reaction UDP-N-acetyl-alpha-D-muramoyl-L-alanyl-gamma-D-glutamyl-meso-2,6-diaminopimeloyl-D-alanyl-D-alanine + di-trans,octa-cis-undecaprenyl phosphate = di-trans,octa-cis-undecaprenyl diphospho-N-acetyl-alpha-D-muramoyl-L-alanyl-D-glutamyl-meso-2,6-diaminopimeloyl-D-alanyl-D-alanine + UMP. Its pathway is cell wall biogenesis; peptidoglycan biosynthesis. Its function is as follows. Catalyzes the initial step of the lipid cycle reactions in the biosynthesis of the cell wall peptidoglycan: transfers peptidoglycan precursor phospho-MurNAc-pentapeptide from UDP-MurNAc-pentapeptide onto the lipid carrier undecaprenyl phosphate, yielding undecaprenyl-pyrophosphoryl-MurNAc-pentapeptide, known as lipid I. The sequence is that of Phospho-N-acetylmuramoyl-pentapeptide-transferase from Vibrio cholerae serotype O1 (strain M66-2).